The following is a 774-amino-acid chain: Ent-beyerene synthase KSL4, chloroplastic (774 aa).

Residues 1 to 35 (MLLGSTNTLRISSHGKEWEGKTLTGMPLGKVNQRV) constitute a chloroplast transit peptide. Residues Asp-525, Asp-529, Asn-668, Asp-669, Thr-672, and Glu-676 each coordinate Mg(2+). The short motif at 525–529 (DDFFD) is the DDXXD motif element.

The protein belongs to the terpene synthase family. Requires Mg(2+) as cofactor.

It localises to the plastid. Its subcellular location is the chloroplast. It catalyses the reaction ent-copalyl diphosphate = ent-beyerene + diphosphate. It carries out the reaction ent-copalyl diphosphate = ent-atiserene + diphosphate. The catalysed reaction is ent-copalyl diphosphate = ent-kaur-16-ene + diphosphate. Its pathway is secondary metabolite biosynthesis; terpenoid biosynthesis. Functionally, diterpene cyclase involved in the biosynthesis of labdane-related diterpenoids (LRDs) natural products. Catalyzes the cyclization of ent-CDP into ent-beyerene as a major and ent-kaurene and ent-atiserene as minor products. The protein is Ent-beyerene synthase KSL4, chloroplastic of Ricinus communis (Castor bean).